A 289-amino-acid polypeptide reads, in one-letter code: Phospholipase C (289 aa).

A signal peptide spans 1-25; it reads MKFKKVVLGMCLIASVLVFPVTIKA. The propeptide occupies 26 to 51; sequence NACCDEYLQTPAAPHDIDSKLPHKLS. Zn(2+) is bound by residues tryptophan 52, histidine 65, aspartate 106, histidine 120, histidine 169, aspartate 173, histidine 179, histidine 193, and glutamate 197. Positions 52-289 constitute a Zn-dependent PLC domain; sequence WSADNPTNTD…LEFWSKKTNE (238 aa).

It belongs to the bacterial zinc-metallophospholipase C family. As to quaternary structure, forms monomers, dimers and higher order oligomers, but only the monomer is enzymatically active. It depends on Zn(2+) as a cofactor.

It localises to the secreted. It catalyses the reaction a 1,2-diacyl-sn-glycero-3-phosphocholine + H2O = phosphocholine + a 1,2-diacyl-sn-glycerol + H(+). It carries out the reaction 1,2-dihexadecanoyl-sn-glycero-3-phosphocholine + H2O = 1,2-dihexadecanoyl-sn-glycerol + phosphocholine + H(+). The catalysed reaction is 1-hexadecanoyl-2-(9Z-octadecenoyl)-sn-glycero-3-phosphocholine + H2O = 1-hexadecanoyl-2-(9Z-octadecenoyl)-sn-glycerol + phosphocholine + H(+). The enzyme catalyses 1,2-di-(9Z-octadecenoyl)-sn-glycero-3-phosphocholine + H2O = 1,2-di-(9Z-octadecenoyl)-sn-glycerol + phosphocholine + H(+). It catalyses the reaction a 1,2-diacyl-sn-glycero-3-phosphoethanolamine + H2O = phosphoethanolamine + a 1,2-diacyl-sn-glycerol + H(+). It carries out the reaction 1,2-di-(9Z-octadecenoyl)-sn-glycero-3-phosphoethanolamine + H2O = phosphoethanolamine + 1,2-di-(9Z-octadecenoyl)-sn-glycerol + H(+). The catalysed reaction is 1,2-dihexadecanoyl-sn-glycero-3-phosphoethanolamine + H2O = 1,2-dihexadecanoyl-sn-glycerol + phosphoethanolamine + H(+). The enzyme catalyses a 1,2-diacyl-sn-glycero-3-phospho-L-serine + H2O = O-phospho-L-serine + a 1,2-diacyl-sn-glycerol + H(+). It catalyses the reaction a 1,2-diacyl-sn-glycero-3-phosphoglycerol + H2O = glycerol 1-phosphate + a 1,2-diacyl-sn-glycerol + H(+). It carries out the reaction a 1,2-diacyl-sn-glycero-3-phospho-(1D-myo-inositol) + H2O = 1D-myo-inositol 1-phosphate + a 1,2-diacyl-sn-glycerol + H(+). The catalysed reaction is a sphingomyelin + H2O = phosphocholine + an N-acylsphing-4-enine + H(+). The enzyme catalyses a 1-O-(1Z-alkenyl)-2-acyl-sn-glycero-3-phosphoethanolamine + H2O = a 1-O-(1Z-alkenyl)-2-acyl-sn-glycerol + phosphoethanolamine + H(+). With respect to regulation, enzymatic activity of LmPC-PLC can be specifically inhibited by its propeptide added in trans. The tendency of the enzyme to oligomerize, which appears to largely attenuate the enzymatic activity, may be one of the mechanisms regulating phospholipase activity in the host cell during the different steps of the infection cycle of L.monocytogenes. Enzyme activity is inhibited by EDTA and o-phenanthroline in vitro. Functionally, major virulence factor whose phospholipase activity facilitates pore formation by the pore-forming toxin listeriolysin O (LLO), leading to vacuolar membrane disruption and vacuolar escape of L.monocytogenes, which enables the bacterium to spread in the host. Acts as a phospholipase C exhibiting broad substrate specificity, with the highest activities towards diacylglycerophospholipids with phosphocholine, phosphoserine, and phosphoethanolamine head groups, but less towards phosphoglycerol or phosphoinositol head groups. Is also able to hydrolyze sphingomyelin and plasmenylethanolamine. This Listeria monocytogenes serovar 1/2a (strain ATCC BAA-679 / EGD-e) protein is Phospholipase C.